Here is a 1101-residue protein sequence, read N- to C-terminus: Translation initiation factor IF-2 (1101 aa).

2 disordered regions span residues glutamine 81–phenylalanine 437 and serine 452–glutamate 509. Over residues proline 93–proline 108 the composition is skewed to polar residues. Over residues isoleucine 110–proline 124 the composition is skewed to pro residues. Composition is skewed to polar residues over residues glutamate 128–serine 149 and serine 157–tyrosine 184. The span at asparagine 185–serine 196 shows a compositional bias: low complexity. Positions alanine 197–asparagine 206 are enriched in polar residues. Composition is skewed to basic and acidic residues over residues serine 228–glutamate 237, lysine 248–serine 288, and valine 295–arginine 340. The span at glutamate 361–leucine 378 shows a compositional bias: acidic residues. 2 stretches are compositionally biased toward basic residues: residues proline 385–lysine 397 and lysine 414–glutamine 428. Positions glutamate 484–glutamine 506 are enriched in basic and acidic residues. In terms of domain architecture, tr-type G spans arginine 592–serine 765. A G1 region spans residues glycine 601–threonine 608. Glycine 601–threonine 608 is a binding site for GTP. Residues glycine 626–histidine 630 are G2. A G3 region spans residues aspartate 651–glycine 654. GTP is bound by residues aspartate 651 to histidine 655 and asparagine 705 to aspartate 708. Residues asparagine 705–aspartate 708 are G4. The tract at residues serine 741–leucine 743 is G5.

It belongs to the TRAFAC class translation factor GTPase superfamily. Classic translation factor GTPase family. IF-2 subfamily.

The protein resides in the cytoplasm. Its function is as follows. One of the essential components for the initiation of protein synthesis. Protects formylmethionyl-tRNA from spontaneous hydrolysis and promotes its binding to the 30S ribosomal subunits. Also involved in the hydrolysis of GTP during the formation of the 70S ribosomal complex. The protein is Translation initiation factor IF-2 of Gloeothece citriformis (strain PCC 7424) (Cyanothece sp. (strain PCC 7424)).